A 1357-amino-acid polypeptide reads, in one-letter code: DNA-directed RNA polymerase subunit beta (1357 aa).

Belongs to the RNA polymerase beta chain family. As to quaternary structure, the RNAP catalytic core consists of 2 alpha, 1 beta, 1 beta' and 1 omega subunit. When a sigma factor is associated with the core the holoenzyme is formed, which can initiate transcription.

It carries out the reaction RNA(n) + a ribonucleoside 5'-triphosphate = RNA(n+1) + diphosphate. Functionally, DNA-dependent RNA polymerase catalyzes the transcription of DNA into RNA using the four ribonucleoside triphosphates as substrates. The chain is DNA-directed RNA polymerase subunit beta from Neorickettsia sennetsu (Ehrlichia sennetsu).